The following is a 1403-amino-acid chain: Centrosomal protein of 162 kDa (1403 aa).

The disordered stretch occupies residues 19–44; that stretch reads ELSDDSFENSNETPSQPNKDRKKKDT. Polar residues predominate over residues 26-35; the sequence is ENSNETPSQP. Residues Ser-156 and Ser-159 each carry the phosphoserine modification. Disordered stretches follow at residues 171-235, 305-342, and 449-586; these read NVEP…EKTG, DTGE…TTES, and NPSL…SDDS. The span at 176-189 shows a compositional bias: basic and acidic residues; it reads EGGRENESEHKELP. The segment covering 192–204 has biased composition (acidic residues); it reads YSDDFEDAEDTDE. A compositionally biased stretch (basic and acidic residues) spans 206–220; that stretch reads LITKDEETRPKENPE. Residues 449 to 466 are compositionally biased toward polar residues; that stretch reads NPSLLPQDNKANQTSRSR. At Ser-468 the chain carries Phosphoserine. Positions 481-496 are enriched in basic residues; it reads PCKKARSAPPLPRRKP. A compositionally biased stretch (polar residues) spans 504–517; the sequence is ARSSGYSKPSSPLQ. Composition is skewed to basic and acidic residues over residues 522–532 and 567–581; these read LEKKTSKDNTK and PHRE…RPED. Coiled coils occupy residues 610–1120, 1170–1205, and 1234–1385; these read KRAQ…MLSR, EVLE…QLES, and CQNA…LHRQ.

Belongs to the CEP162 family. As to quaternary structure, interacts with alpha-tubulin. Interacts with CPNE4. Interacts with CEP290.

It is found in the cytoplasm. The protein localises to the cytoskeleton. The protein resides in the microtubule organizing center. It localises to the centrosome. Its subcellular location is the centriole. It is found in the spindle. The protein localises to the nucleus. Its function is as follows. Required to promote assembly of the transition zone in primary cilia. Acts by specifically recognizing and binding the axonemal microtubule. Localizes to the distal ends of centrioles before ciliogenesis and directly binds to axonemal microtubule, thereby promoting and restricting transition zone formation specifically at the cilia base. Required to mediate CEP290 association with microtubules. The protein is Centrosomal protein of 162 kDa (Cep162) of Rattus norvegicus (Rat).